A 431-amino-acid polypeptide reads, in one-letter code: Tol-Pal system protein TolB (431 aa).

Residues Met1–Ser19 form the signal peptide.

Belongs to the TolB family. In terms of assembly, the Tol-Pal system is composed of five core proteins: the inner membrane proteins TolA, TolQ and TolR, the periplasmic protein TolB and the outer membrane protein Pal. They form a network linking the inner and outer membranes and the peptidoglycan layer.

The protein resides in the periplasm. Its function is as follows. Part of the Tol-Pal system, which plays a role in outer membrane invagination during cell division and is important for maintaining outer membrane integrity. TolB occupies a key intermediary position in the Tol-Pal system because it communicates directly with both membrane-embedded components, Pal in the outer membrane and TolA in the inner membrane. The polypeptide is Tol-Pal system protein TolB (Wigglesworthia glossinidia brevipalpis).